The sequence spans 421 residues: UDP-N-acetylglucosamine 1-carboxyvinyltransferase (421 aa).

Residue 24 to 25 (KN) coordinates phosphoenolpyruvate. R93 is a UDP-N-acetyl-alpha-D-glucosamine binding site. The active-site Proton donor is C117. C117 is modified (2-(S-cysteinyl)pyruvic acid O-phosphothioketal). UDP-N-acetyl-alpha-D-glucosamine contacts are provided by D307 and I329.

Belongs to the EPSP synthase family. MurA subfamily.

Its subcellular location is the cytoplasm. The enzyme catalyses phosphoenolpyruvate + UDP-N-acetyl-alpha-D-glucosamine = UDP-N-acetyl-3-O-(1-carboxyvinyl)-alpha-D-glucosamine + phosphate. It functions in the pathway cell wall biogenesis; peptidoglycan biosynthesis. In terms of biological role, cell wall formation. Adds enolpyruvyl to UDP-N-acetylglucosamine. This Blochmanniella pennsylvanica (strain BPEN) protein is UDP-N-acetylglucosamine 1-carboxyvinyltransferase.